The sequence spans 248 residues: ATP synthase subunit a, chloroplastic (248 aa).

5 consecutive transmembrane segments (helical) span residues 37 to 57 (AQVL…AFVT), 96 to 116 (VPFI…GALF), 135 to 155 (INTT…AGLH), 200 to 220 (LVVA…MMFL), and 221 to 241 (GLFT…AYIG).

Belongs to the ATPase A chain family. As to quaternary structure, F-type ATPases have 2 components, CF(1) - the catalytic core - and CF(0) - the membrane proton channel. CF(1) has five subunits: alpha(3), beta(3), gamma(1), delta(1), epsilon(1). CF(0) has four main subunits: a, b, b' and c.

It localises to the plastid. Its subcellular location is the chloroplast thylakoid membrane. Key component of the proton channel; it plays a direct role in the translocation of protons across the membrane. This Psilotum nudum (Whisk fern) protein is ATP synthase subunit a, chloroplastic.